An 85-amino-acid polypeptide reads, in one-letter code: U4-theraphotoxin-Hhn1l (85 aa).

An N-terminal signal peptide occupies residues 1 to 22 (MKVTLIAFLTCAAVLVLHTTAA). The propeptide occupies 23–48 (EELEAESQLMGVGMPDTELAAVDEER). Disulfide bonds link C52–C66, C56–C77, and C71–C82.

It belongs to the neurotoxin 12 (Hwtx-2) family. 02 (Hwtx-2) subfamily. Expressed by the venom gland.

It is found in the secreted. Functionally, postsynaptic neurotoxin. The chain is U4-theraphotoxin-Hhn1l from Cyriopagopus hainanus (Chinese bird spider).